Here is a 970-residue protein sequence, read N- to C-terminus: ATP-dependent DNA helicase DDX11 (970 aa).

The 437-residue stretch at 9–445 folds into the Helicase ATP-binding domain; the sequence is GAIHFPFPFT…KNLMYLKQIL (437 aa). 44–51 lines the ATP pocket; sequence SPTGTGKS. The residue at position 262 (serine 262) is a Phosphoserine. The [4Fe-4S] cluster site is built by cysteine 267 and cysteine 285. A compositionally biased stretch (basic and acidic residues) spans 289–304; sequence QRSRHEKKKGAEEEKP. The interval 289 to 312 is disordered; sequence QRSRHEKKKGAEEEKPKRRRQEKQ. 2 residues coordinate [4Fe-4S] cluster: cysteine 315 and cysteine 350. The DEAH box signature appears at 393–396; that stretch reads DEAH. Residues 818-849 form a disordered region; that stretch reads TLSPRPGTPREGSGGEPVHEGRQPVHRQGHQA.

Belongs to the DEAD box helicase family. DEAH subfamily. DDX11/CHL1 sub-subfamily. As to quaternary structure, associates with the CTF18-RFC complex. Associates with a cohesin complex composed of RAD21, SMC1 proteins and SMC3. Interacts with CHTF18. Interacts with DSCC1. Interacts with FEN1; this interaction is direct and increases flap endonuclease activity of FEN1. Interacts with PCNA. Interacts with POLR1A and UBTF. Interacts with RAD21, SMC1 proteins and SMC3. Interacts with RFC2. Interacts with TIMELESS; this interaction increases recruitment of both proteins onto chromatin in response to replication stress induction by hydroxyurea. (Microbial infection) Interacts with bovine papillomavirus type 1 regulatory protein E2; this interaction stimulates the recruitment of E2 onto mitotic chromosomes. Mg(2+) is required as a cofactor. [4Fe-4S] cluster serves as cofactor. In terms of tissue distribution, expressed in melanoma cells. Not detected in epidermal melanocytes of normal skin (at protein level). Highly expressed in spleen, B-cells, thymus, testis, ovary, small intestine and pancreas. Very low expression seen in brain. Expressed in dividing cells and/or cells undergoing high levels of recombination. No expression detected in cells signaled to terminally differentiate. Expressed weakly in keratinocytes.

It localises to the nucleus. It is found in the nucleolus. Its subcellular location is the cytoplasm. The protein resides in the cytoskeleton. The protein localises to the spindle pole. It localises to the midbody. It is found in the microtubule organizing center. Its subcellular location is the centrosome. The protein resides in the chromosome. The catalysed reaction is Couples ATP hydrolysis with the unwinding of duplex DNA at the replication fork by translocating in the 5'-3' direction. This creates two antiparallel DNA single strands (ssDNA). The leading ssDNA polymer is the template for DNA polymerase III holoenzyme which synthesizes a continuous strand.. It catalyses the reaction ATP + H2O = ADP + phosphate + H(+). Its activity is regulated as follows. ATPase activity is stimulated by high magnesium salt levels (up to a 0.1 M), and potassium salts (glutamate, chloride or acetate) are more effective than the corresponding sodium salts. ATPase activity is enhanced by the long non-coding RNA (lncRNA) cohesion regulator noncoding RNA (CONCR). Double-stranded DNA helicase activity is maximal with magnesium ions at low concentrations (0.5-1 mM) whereas is markedly inhibited at higher levels (5 mM and above). Double-stranded DNA helicase activity is stimulated by 25-50 mM potassium acetate, stimulated to a lesser extent by 25 mM of ammonium acetate, and markedly inhibited by sodium acetate. DNA-dependent ATPase and ATP-dependent DNA helicase that participates in various functions in genomic stability, including DNA replication, DNA repair and heterochromatin organization as well as in ribosomal RNA synthesis. Its double-stranded DNA helicase activity requires either a minimal 5'-single-stranded tail length of approximately 15 nt (flap substrates) or 10 nt length single-stranded gapped DNA substrates of a partial duplex DNA structure for helicase loading and translocation along DNA in a 5' to 3' direction. The helicase activity is capable of displacing duplex regions up to 100 bp, which can be extended up to 500 bp by the replication protein A (RPA) or the cohesion CTF18-replication factor C (Ctf18-RFC) complex activities. Also shows ATPase- and helicase activities on substrates that mimic key DNA intermediates of replication, repair and homologous recombination reactions, including forked duplex, anti-parallel G-quadruplex and three-stranded D-loop DNA molecules. Plays a role in DNA double-strand break (DSB) repair at the DNA replication fork during DNA replication recovery from DNA damage. Recruited with TIMELESS factor upon DNA-replication stress response at DNA replication fork to preserve replication fork progression, and hence ensure DNA replication fidelity. Also cooperates with TIMELESS factor during DNA replication to regulate proper sister chromatid cohesion and mitotic chromosome segregation. Stimulates 5'-single-stranded DNA flap endonuclease activity of FEN1 in an ATP- and helicase-independent manner; and hence it may contribute in Okazaki fragment processing at DNA replication fork during lagging strand DNA synthesis. Its ability to function at DNA replication fork is modulated by its binding to long non-coding RNA (lncRNA) cohesion regulator non-coding RNA DDX11-AS1/CONCR, which is able to increase both DDX11 ATPase activity and binding to DNA replicating regions. Also plays a role in heterochromatin organization. Involved in rRNA transcription activation through binding to active hypomethylated rDNA gene loci by recruiting UBTF and the RNA polymerase Pol I transcriptional machinery. Plays a role in embryonic development and prevention of aneuploidy. Involved in melanoma cell proliferation and survival. Associates with chromatin at DNA replication fork regions. Binds to single- and double-stranded DNAs. In terms of biological role, (Microbial infection) Required for bovine papillomavirus type 1 regulatory protein E2 loading onto mitotic chromosomes during DNA replication for the viral genome to be maintained and segregated. This chain is ATP-dependent DNA helicase DDX11, found in Homo sapiens (Human).